Here is a 455-residue protein sequence, read N- to C-terminus: UDP-N-acetylmuramoylalanine--D-glutamate ligase (455 aa).

119 to 125 (GTNGKTT) contributes to the ATP binding site.

It belongs to the MurCDEF family.

The protein resides in the cytoplasm. It catalyses the reaction UDP-N-acetyl-alpha-D-muramoyl-L-alanine + D-glutamate + ATP = UDP-N-acetyl-alpha-D-muramoyl-L-alanyl-D-glutamate + ADP + phosphate + H(+). Its pathway is cell wall biogenesis; peptidoglycan biosynthesis. In terms of biological role, cell wall formation. Catalyzes the addition of glutamate to the nucleotide precursor UDP-N-acetylmuramoyl-L-alanine (UMA). The protein is UDP-N-acetylmuramoylalanine--D-glutamate ligase of Listeria monocytogenes serotype 4b (strain F2365).